The chain runs to 311 residues: Peptide methionine sulfoxide reductase MsrA/MsrB (311 aa).

Residues 1 to 155 (MAEIYLAGGC…PGGYCHINVN (155 aa)) are peptide methionine sulfoxide reductase A. Cysteine 10 is an active-site residue. In terms of domain architecture, MsrB spans 172–295 (DAELKEQLTQ…NSAALRFIPK (124 aa)). Cysteine 284 (nucleophile) is an active-site residue.

The protein in the N-terminal section; belongs to the MsrA Met sulfoxide reductase family. In the C-terminal section; belongs to the MsrB Met sulfoxide reductase family.

The catalysed reaction is L-methionyl-[protein] + [thioredoxin]-disulfide + H2O = L-methionyl-(S)-S-oxide-[protein] + [thioredoxin]-dithiol. The enzyme catalyses [thioredoxin]-disulfide + L-methionine + H2O = L-methionine (S)-S-oxide + [thioredoxin]-dithiol. It carries out the reaction L-methionyl-[protein] + [thioredoxin]-disulfide + H2O = L-methionyl-(R)-S-oxide-[protein] + [thioredoxin]-dithiol. Has an important function as a repair enzyme for proteins that have been inactivated by oxidation. Catalyzes the reversible oxidation-reduction of methionine sulfoxide in proteins to methionine. Involved in protection against oxidative stress when the bacterium enters the host bloodstream and required for maximal growth under aerobic and anaerobic conditions. The chain is Peptide methionine sulfoxide reductase MsrA/MsrB (msrAB) from Streptococcus gordonii (strain Challis / ATCC 35105 / BCRC 15272 / CH1 / DL1 / V288).